A 635-amino-acid polypeptide reads, in one-letter code: MRYSLSLALLGVAAVTVVAHPHTPGRHGVERRAIDLDAFRLQPTAEYVPKEEVPDQSSLAFISNDNYVDVATDLVKSVAPGIEFRVVGDHYVGTNGVAHVNFKQTAHGIDIDNADFNVNVRDGKVFSYGNSFFTGKIPEESPLKKRDFSDPTVALTGATTVLQLPISGEAKAEAKEGTETYTLKGTSGAVSDPEARLVYLVRDDSLALTWRVETDIEDNWLLSYVDANNKEQVHGVVDYVSHASFQVYPWGTNDPLEAGAARVTLTDPWDKASSPFGWLSDGTSTYTTTRGNNAIAQSNPSGGTAYLNNYRPTNANSIFSYPWTPAMSPPSSFVDFSATQLFYTANVFHDLLYKLGFTEAAGNFQVNNNGKGGLGNDQVILNTQDGSGTNNANFATPPDGQNGRMRMYIWTYTTPQRDSSLEAGVVIHEYTHGLSNRLTGGPSNSGCLSALEAGGMGEGWSDFFATAARIKQNDTADTDYPMGEWVAANPKGIRAYPYSTSLTRNPQTYATTNTLSTVHPIGNVWATVLYEVLWALVGKHGLQVSTFPTFDASGVPTSGNFLAQKLVLDGMALQPCNPNFVQARDAIIDADQALTGGANKCELWTAFAKRGLGSGAKYAASKRSVESKTIPAGVC.

The N-terminal stretch at 1–19 (MRYSLSLALLGVAAVTVVA) is a signal peptide. A propeptide spanning residues 20–242 (HPHTPGRHGV…VHGVVDYVSH (223 aa)) is cleaved from the precursor. H428 is a binding site for Zn(2+). E429 is an active-site residue. H432 contributes to the Zn(2+) binding site. The N-linked (GlcNAc...) asparagine glycan is linked to N473.

The protein belongs to the peptidase M36 family. It depends on Zn(2+) as a cofactor.

The protein resides in the secreted. Secreted metalloproteinase that allows assimilation of proteinaceous substrates. The chain is Extracellular metalloproteinase MEP (MEP) from Pyricularia oryzae (strain 70-15 / ATCC MYA-4617 / FGSC 8958) (Rice blast fungus).